Reading from the N-terminus, the 191-residue chain is dITP/XTP pyrophosphatase (191 aa).

8–13 (SKNQGK) serves as a coordination point for substrate. Residues E38 and D67 each contribute to the Mg(2+) site. The active-site Proton acceptor is D67. Substrate-binding positions include S68, 146 to 149 (FGYD), K169, and 174 to 175 (HR).

Belongs to the HAM1 NTPase family. As to quaternary structure, homodimer. Requires Mg(2+) as cofactor.

It carries out the reaction XTP + H2O = XMP + diphosphate + H(+). The catalysed reaction is dITP + H2O = dIMP + diphosphate + H(+). The enzyme catalyses ITP + H2O = IMP + diphosphate + H(+). Pyrophosphatase that catalyzes the hydrolysis of nucleoside triphosphates to their monophosphate derivatives, with a high preference for the non-canonical purine nucleotides XTP (xanthosine triphosphate), dITP (deoxyinosine triphosphate) and ITP. Seems to function as a house-cleaning enzyme that removes non-canonical purine nucleotides from the nucleotide pool, thus preventing their incorporation into DNA/RNA and avoiding chromosomal lesions. This chain is dITP/XTP pyrophosphatase, found in Prochlorococcus marinus subsp. pastoris (strain CCMP1986 / NIES-2087 / MED4).